Here is a 91-residue protein sequence, read N- to C-terminus: Sec-independent protein translocase protein TatA (91 aa).

Residues 1–21 (MGAMSPWHWAIVALVVIILFG) traverse the membrane as a helical segment. Positions 44-91 (KEMQNDNSTPAPTAQQSAPAELPVADTTTAPVTPPAPVQPQHTEPKSA) are disordered. Low complexity predominate over residues 51 to 74 (STPAPTAQQSAPAELPVADTTTAP).

The protein belongs to the TatA/E family. The Tat system comprises two distinct complexes: a TatABC complex, containing multiple copies of TatA, TatB and TatC subunits, and a separate TatA complex, containing only TatA subunits. Substrates initially bind to the TatABC complex, which probably triggers association of the separate TatA complex to form the active translocon.

Its subcellular location is the cell membrane. Its function is as follows. Part of the twin-arginine translocation (Tat) system that transports large folded proteins containing a characteristic twin-arginine motif in their signal peptide across membranes. TatA could form the protein-conducting channel of the Tat system. The sequence is that of Sec-independent protein translocase protein TatA from Rhodococcus jostii (strain RHA1).